Consider the following 417-residue polypeptide: Type II methyltransferase M.KpnI (417 aa).

It belongs to the N(4)/N(6)-methyltransferase family.

The catalysed reaction is a 2'-deoxyadenosine in DNA + S-adenosyl-L-methionine = an N(6)-methyl-2'-deoxyadenosine in DNA + S-adenosyl-L-homocysteine + H(+). A beta subtype methylase, recognizes the double-stranded sequence 5'-GGTACC-3', methylates A-4 on both strands, and protects the DNA from cleavage by the KpnI endonuclease. The sequence is that of Type II methyltransferase M.KpnI from Klebsiella pneumoniae.